Reading from the N-terminus, the 1273-residue chain is Homeobox protein cut-like ceh-44 (1273 aa).

Coiled-coil stretches lie at residues 101–407 and 440–468; these read LLKG…DGFK and RQKN…KFED. 3 consecutive DNA-binding regions (CUT) follow at residues 591–681, 832–919, and 978–1065; these read NVQA…LSPR, QAQY…KQPK, and IDES…KEES. A disordered region spans residues 1069-1100; the sequence is VKAKIESVPAPREAPRPVKRKHSSDTDDYDLN. The homeobox DNA-binding region spans 1103 to 1162; it reads KPIQRTVITDYQKDTLRFVFVNEQHPSNELCEQISLKLDMSLRTVQNWFHNHRTRSKARE.

This sequence belongs to the CUT homeobox family.

The protein localises to the nucleus. Probable DNA-binding regulatory protein involved in cell-fate specification. This is Homeobox protein cut-like ceh-44 from Caenorhabditis elegans.